A 423-amino-acid chain; its full sequence is GPI mannosyltransferase 2 (423 aa).

A run of 9 helical transmembrane segments spans residues 7-27 (LTLIFIAACLSRILQLTILSG), 102-122 (VILGGTIVANVAFVAATLVLY), 128-148 (IFNPTFAFLTSLLYLLPPTAT), 151-171 (APYTEPIYSLLTFSGIYLLSI), 191-211 (TGIFNSITLMCFAVFGDAHIF), 228-248 (FLSAILVVAPFFMFQHYTETV), 298-318 (LAMPILFFSLAGVVKFFSHLV), 333-353 (PPPILFELYSVHVLTMALLLF), and 400-420 (YWIGWTVVWGAVAAVLWAGHY).

Belongs to the PIGV family.

It localises to the endoplasmic reticulum membrane. It participates in glycolipid biosynthesis; glycosylphosphatidylinositol-anchor biosynthesis. Functionally, mannosyltransferase involved in glycosylphosphatidylinositol-anchor biosynthesis. Transfers the second mannose to the glycosylphosphatidylinositol during GPI precursor assembly. The sequence is that of GPI mannosyltransferase 2 (GPI18) from Cryptococcus neoformans var. neoformans serotype D (strain JEC21 / ATCC MYA-565) (Filobasidiella neoformans).